We begin with the raw amino-acid sequence, 218 residues long: Adenylate kinase (218 aa).

10–15 (GAGKGT) is a binding site for ATP. The interval 30 to 59 (STGDMLRAAVKEETPLGRKAKEVMDSGNLV) is NMP. Residues T31, R36, 57–59 (NLV), 85–88 (GFPR), and Q92 contribute to the AMP site. The LID stretch occupies residues 122–159 (GRRVHPASGRTYHLTFNPPQQQGVDDETGEPLIQRVDD). ATP is bound by residues R123 and 132–133 (TY). Residues R156 and R167 each coordinate AMP. Residue G203 coordinates ATP.

This sequence belongs to the adenylate kinase family. Monomer.

The protein localises to the cytoplasm. It catalyses the reaction AMP + ATP = 2 ADP. Its pathway is purine metabolism; AMP biosynthesis via salvage pathway; AMP from ADP: step 1/1. Catalyzes the reversible transfer of the terminal phosphate group between ATP and AMP. Plays an important role in cellular energy homeostasis and in adenine nucleotide metabolism. This Chlorobium phaeovibrioides (strain DSM 265 / 1930) (Prosthecochloris vibrioformis (strain DSM 265)) protein is Adenylate kinase.